The primary structure comprises 812 residues: Valine--tRNA ligase (812 aa).

Positions 46–56 match the 'HIGH' region motif; that stretch reads PTVSGQLHIGH. The short motif at 536–540 is the 'KMSKS' region element; that stretch reads KMSKS. K539 is a binding site for ATP.

It belongs to the class-I aminoacyl-tRNA synthetase family. ValS type 2 subfamily. As to quaternary structure, monomer.

Its subcellular location is the cytoplasm. It carries out the reaction tRNA(Val) + L-valine + ATP = L-valyl-tRNA(Val) + AMP + diphosphate. Functionally, catalyzes the attachment of valine to tRNA(Val). As ValRS can inadvertently accommodate and process structurally similar amino acids such as threonine, to avoid such errors, it has a 'posttransfer' editing activity that hydrolyzes mischarged Thr-tRNA(Val) in a tRNA-dependent manner. This is Valine--tRNA ligase from Rickettsia conorii (strain ATCC VR-613 / Malish 7).